Consider the following 214-residue polypeptide: Small ribosomal subunit protein uS5 (214 aa).

One can recognise an S5 DRBM domain in the interval 55–118 (LKYERLDVGI…RNAKLNITPV (64 aa)).

Belongs to the universal ribosomal protein uS5 family. Part of the 30S ribosomal subunit. Contacts protein S4.

Its function is as follows. With S4 and S12 plays an important role in translational accuracy. This Staphylothermus marinus (strain ATCC 43588 / DSM 3639 / JCM 9404 / F1) protein is Small ribosomal subunit protein uS5.